The sequence spans 394 residues: Regulatory protein E2 (394 aa).

A transactivation domain region spans residues 1 to 201 (METLAKRLDA…QVIVSPASIS (201 aa)). The span at 226 to 235 (NTTPTPTTIT) shows a compositional bias: low complexity. Residues 226-309 (NTTPTPTTIT…RNPCGNQTTP (84 aa)) are disordered. A DNA-binding domain region spans residues 307–394 (TTPVIHLQGD…IGYMSMLQFM (88 aa)).

The protein belongs to the papillomaviridae E2 protein family. Binds DNA as homodimer. Interacts with protein E1; this interaction greatly increases E1 DNA-binding activity. Interacts with protein L1; this interaction enhances E2-dependent replication and transcription activation. Interacts with protein L2; this interaction inhibits E2 transcriptional activity but not DNA replication function E2. Interacts with protein E7; this interaction inhibits E7 oncogenic activity. Interacts with host TAF1; this interaction modulates E2-dependent transcriptional regulation. Interacts with host BRD4; this interaction mediates E2 transcriptional activation function. Additionally, the interaction with host BRD4 on mitotic chromosomes mediates tethering of the viral genome. Interacts with host TOPBP1; this interaction is required for optimal viral DNA replication. Post-translationally, phosphorylated.

The protein localises to the host nucleus. Plays a role in the initiation of viral DNA replication. A dimer of E2 interacts with a dimer of E1 in order to improve specificity of E1 DNA binding activity. Once the complex recognizes and binds DNA at specific sites, the E2 dimer is removed from DNA. E2 also regulates viral transcription through binding to the E2RE response element (5'-ACCNNNNNNGGT-3') present in multiple copies in the regulatory regions of the viral genome. Activates or represses transcription depending on E2RE's position with regards to proximal promoter elements including the TATA-box. Repression occurs by sterically hindering the assembly of the transcription initiation complex. This Homo sapiens (Human) protein is Regulatory protein E2.